A 101-amino-acid chain; its full sequence is Small ribosomal subunit protein uS14 (101 aa).

It belongs to the universal ribosomal protein uS14 family. As to quaternary structure, part of the 30S ribosomal subunit. Contacts proteins S3 and S10.

In terms of biological role, binds 16S rRNA, required for the assembly of 30S particles and may also be responsible for determining the conformation of the 16S rRNA at the A site. This is Small ribosomal subunit protein uS14 from Buchnera aphidicola subsp. Acyrthosiphon pisum (strain APS) (Acyrthosiphon pisum symbiotic bacterium).